Here is a 565-residue protein sequence, read N- to C-terminus: CTP synthase (565 aa).

Residues 1 to 272 (MARPKNVKHI…DLRVLKKLGL (272 aa)) are amidoligase domain. CTP is bound at residue S18. Residue S18 coordinates UTP. 19-24 (SLGKGI) lines the ATP pocket. Y59 provides a ligand contact to L-glutamine. D76 contributes to the ATP binding site. The Mg(2+) site is built by D76 and E146. Residues 153–155 (DIE), 193–198 (KTKPTQ), and K229 each bind CTP. Residues 193–198 (KTKPTQ) and K229 contribute to the UTP site. The region spanning 299–543 (TIGICGKYTE…VAAAKEYAHG (245 aa)) is the Glutamine amidotransferase type-1 domain. G363 lines the L-glutamine pocket. The active-site Nucleophile; for glutamine hydrolysis is C390. Residues 391–394 (LGMQ), E414, and R471 each bind L-glutamine. Active-site residues include H516 and E518.

The protein belongs to the CTP synthase family. Homotetramer.

The catalysed reaction is UTP + L-glutamine + ATP + H2O = CTP + L-glutamate + ADP + phosphate + 2 H(+). The enzyme catalyses L-glutamine + H2O = L-glutamate + NH4(+). It catalyses the reaction UTP + NH4(+) + ATP = CTP + ADP + phosphate + 2 H(+). The protein operates within pyrimidine metabolism; CTP biosynthesis via de novo pathway; CTP from UDP: step 2/2. Its activity is regulated as follows. Allosterically activated by GTP, when glutamine is the substrate; GTP has no effect on the reaction when ammonia is the substrate. The allosteric effector GTP functions by stabilizing the protein conformation that binds the tetrahedral intermediate(s) formed during glutamine hydrolysis. Inhibited by the product CTP, via allosteric rather than competitive inhibition. Catalyzes the ATP-dependent amination of UTP to CTP with either L-glutamine or ammonia as the source of nitrogen. Regulates intracellular CTP levels through interactions with the four ribonucleotide triphosphates. This chain is CTP synthase, found in Pelodictyon phaeoclathratiforme (strain DSM 5477 / BU-1).